The chain runs to 128 residues: Large ribosomal subunit protein bL17 (128 aa).

The protein belongs to the bacterial ribosomal protein bL17 family. In terms of assembly, part of the 50S ribosomal subunit. Contacts protein L32.

The chain is Large ribosomal subunit protein bL17 from Pseudomonas syringae pv. tomato (strain ATCC BAA-871 / DC3000).